A 573-amino-acid chain; its full sequence is Potassium-transporting ATPase potassium-binding subunit (573 aa).

10 helical membrane passes run 3-23 (AEGLLQILLYLGLLAAVTPLL), 65-85 (GYTLALLSFNLLGLLLLYALL), 136-156 (GLTVQNFVSAATGIAVAVALI), 179-199 (LYVLLPLAFLGALVLVWQGVP), 254-274 (LTNLLESFYLLMIAAALIYSF), 286-306 (ALWTAVFILFVAGLAVTWWAE), 383-403 (AGLYGLLVFVILAVFIAGLMV), 423-443 (VIAVLVFPLGILGGAALTTVV), 489-509 (GLGLAMLLGRFAVIVPTLAIA), and 531-551 (LFITLLIATILIVGGLTFFPA).

The protein belongs to the KdpA family. In terms of assembly, the system is composed of three essential subunits: KdpA, KdpB and KdpC.

It localises to the cell inner membrane. Functionally, part of the high-affinity ATP-driven potassium transport (or Kdp) system, which catalyzes the hydrolysis of ATP coupled with the electrogenic transport of potassium into the cytoplasm. This subunit binds the periplasmic potassium ions and delivers the ions to the membrane domain of KdpB through an intramembrane tunnel. The sequence is that of Potassium-transporting ATPase potassium-binding subunit from Rhodospirillum centenum (strain ATCC 51521 / SW).